Here is a 458-residue protein sequence, read N- to C-terminus: ATP synthase subunit beta (458 aa).

G148 to T155 contributes to the ATP binding site.

The protein belongs to the ATPase alpha/beta chains family. As to quaternary structure, F-type ATPases have 2 components, CF(1) - the catalytic core - and CF(0) - the membrane proton channel. CF(1) has five subunits: alpha(3), beta(3), gamma(1), delta(1), epsilon(1). CF(0) has three main subunits: a(1), b(2) and c(9-12). The alpha and beta chains form an alternating ring which encloses part of the gamma chain. CF(1) is attached to CF(0) by a central stalk formed by the gamma and epsilon chains, while a peripheral stalk is formed by the delta and b chains.

The protein resides in the cell inner membrane. The enzyme catalyses ATP + H2O + 4 H(+)(in) = ADP + phosphate + 5 H(+)(out). Functionally, produces ATP from ADP in the presence of a proton gradient across the membrane. The catalytic sites are hosted primarily by the beta subunits. The sequence is that of ATP synthase subunit beta from Francisella tularensis subsp. holarctica (strain FTNF002-00 / FTA).